Consider the following 1029-residue polypeptide: Tyrosine-protein kinase-like otk (1029 aa).

The first 18 residues, 1–18 (MISIYGLVMALMMASVLA), serve as a signal peptide directing secretion. Residues 19–577 (SSSRFQRVPQ…GGDGFLVTRA (559 aa)) are Extracellular-facing. 5 Ig-like C2-type domains span residues 21 to 110 (SRFQ…AKLS), 109 to 195 (LSVI…RVMS), 247 to 361 (PEDL…APIS), 364 to 459 (PGIL…VAIN), and 464 to 554 (PKFS…VQLV). N-linked (GlcNAc...) asparagine glycosylation is present at Asn-35. Intrachain disulfides connect Cys-42/Cys-91, Cys-133/Cys-184, Cys-272/Cys-350, and Cys-395/Cys-443. 7 N-linked (GlcNAc...) asparagine glycosylation sites follow: Asn-332, Asn-413, Asn-425, Asn-440, Asn-453, Asn-508, and Asn-520. An intrachain disulfide couples Cys-486 to Cys-538. A helical transmembrane segment spans residues 578 to 598 (VLITMTVALAYIVLVVGLMLW). Over 599 to 1029 (CRYRRQARKA…LSKAMQSAEK (431 aa)) the chain is Cytoplasmic. Disordered regions lie at residues 613–675 (LSTK…KKSA) and 714–756 (SPSD…KTSM). The segment covering 651-669 (KSSGDAQKSDDTACSQQSR) has biased composition (polar residues). Residue Ser-674 is modified to Phosphoserine. Positions 688–1024 (LSELIQIGRG…QLGAALSKAM (337 aa)) constitute a Protein kinase; inactive domain. Over residues 716 to 727 (SDKDADTEKQHS) the composition is skewed to basic and acidic residues.

Belongs to the protein kinase superfamily. Tyr protein kinase family. Insulin receptor subfamily. As to quaternary structure, interacts with plexA; component of a receptor complex that mediates the repulsive signaling in response to Semaphorin ligands.

Its subcellular location is the cell membrane. Acts as a calcium-dependent, homophilic cell adhesion molecule that regulates neural recognition during the development of the nervous system. Component of the repulsive Plexin signaling response to regulate motor axon guidance at the embryonic stage. Also component of a receptor complex that is required in the adult visual system to innervate the lamina layer; specific targeting of R1-R6 axons. The sequence is that of Tyrosine-protein kinase-like otk from Drosophila simulans (Fruit fly).